A 154-amino-acid polypeptide reads, in one-letter code: NADPH-dependent 7-cyano-7-deazaguanine reductase (154 aa).

Over residues 1–23 the composition is skewed to polar residues; that stretch reads MPNTDVSSLSMLGQQTETAQSPE. The interval 1–26 is disordered; the sequence is MPNTDVSSLSMLGQQTETAQSPEQAV. Catalysis depends on cysteine 52, which acts as the Thioimide intermediate. The Proton donor role is filled by aspartate 59. Substrate contacts are provided by residues 74–76 and 93–94; these read VES and HE.

It belongs to the GTP cyclohydrolase I family. QueF type 1 subfamily.

Its subcellular location is the cytoplasm. It catalyses the reaction 7-aminomethyl-7-carbaguanine + 2 NADP(+) = 7-cyano-7-deazaguanine + 2 NADPH + 3 H(+). It functions in the pathway tRNA modification; tRNA-queuosine biosynthesis. Functionally, catalyzes the NADPH-dependent reduction of 7-cyano-7-deazaguanine (preQ0) to 7-aminomethyl-7-deazaguanine (preQ1). This Rhizobium leguminosarum bv. trifolii (strain WSM2304) protein is NADPH-dependent 7-cyano-7-deazaguanine reductase.